The sequence spans 723 residues: Zinc finger CCCH domain-containing protein 11A (723 aa).

3 C3H1-type zinc fingers span residues 2–29 (SKQG…HCEA), 31–57 (LGNE…HMEI), and 60–87 (KRSE…HTKG). Disordered regions lie at residues 142–208 (ENSE…KQDD), 223–256 (KKQK…EKEN), 404–428 (KRAE…KLEE), 450–526 (EKAL…VKSL), and 565–681 (VKPS…APLS). Residues 160–175 (ADDDEDDDDQLSEEGE) are compositionally biased toward acidic residues. The stretch at 376–411 (KTFSEALAERKQRRLEEEKQKLEEFLTEKRAEGERK) forms a coiled coil. Polar residues predominate over residues 511-522 (PSNQSAPNSKAQ). Over residues 609–620 (KKAALTAAPALP) the composition is skewed to low complexity. Positions 637-649 (LELQLGSQADSVE) are enriched in polar residues. A compositionally biased stretch (low complexity) spans 650–672 (QSGDSSSASASSQSVAKAQQLSS).

The protein localises to the nucleus speckle. Functionally, through its association with TREX complex components, may participate in the export and post-transcriptional coordination of selected mRNA transcripts. Binds RNA. The protein is Zinc finger CCCH domain-containing protein 11A (ZC3H11A) of Gallus gallus (Chicken).